A 468-amino-acid chain; its full sequence is Trehalose-2-sulfate acyltransferase PapA2 (468 aa).

The protein belongs to the PapA acyltransferase family.

It carries out the reaction 2-O-sulfo-alpha,alpha-trehalose + hexadecanoyl-CoA = 2-O-sulfo-2'-O-hexadecanoyl-alpha,alpha-trehalose + CoA. In terms of biological role, catalyzes the acylation of trehalose-2-sulfate by adding the palmitoyl group at the 2'-position to yield the intermediate trehalose-2-sulfate-2'-palmitate (SL659). The polypeptide is Trehalose-2-sulfate acyltransferase PapA2 (papA2) (Mycobacterium tuberculosis (strain ATCC 25177 / H37Ra)).